Consider the following 282-residue polypeptide: Deoxyribonuclease-1 (282 aa).

The first 22 residues, 1–22, serve as a signal peptide directing secretion; the sequence is MRGMKLLGALLALAALLQGAVS. Asn40 is a glycosylation site (N-linked (GlcNAc...) asparagine). Glu100 is an active-site residue. A disulfide bridge links Cys123 with Cys126. Asn128 carries an N-linked (GlcNAc...) asparagine glycan. His156 is a catalytic residue. Cys195 and Cys231 are disulfide-bonded.

It belongs to the DNase I family. Ca(2+) is required as a cofactor. Mg(2+) serves as cofactor. Principally in tissues of the digestive system. Highest levels found in urine, but also relatively abundant in semen and saliva.

It is found in the secreted. The protein localises to the zymogen granule. It localises to the nucleus envelope. The catalysed reaction is Endonucleolytic cleavage to 5'-phosphodinucleotide and 5'-phosphooligonucleotide end-products.. Its function is as follows. Serum endocuclease secreted into body fluids by a wide variety of exocrine and endocrine organs. Expressed by non-hematopoietic tissues and preferentially cleaves protein-free DNA. Among other functions, seems to be involved in cell death by apoptosis. Binds specifically to G-actin and blocks actin polymerization. Together with DNASE1L3, plays a key role in degrading neutrophil extracellular traps (NETs). NETs are mainly composed of DNA fibers and are released by neutrophils to bind pathogens during inflammation. Degradation of intravascular NETs by DNASE1 and DNASE1L3 is required to prevent formation of clots that obstruct blood vessels and cause organ damage following inflammation. The chain is Deoxyribonuclease-1 from Homo sapiens (Human).